The chain runs to 258 residues: D-beta-hydroxybutyrate dehydrogenase (258 aa).

8-32 (LVTGSTSGIGLGIAKALAAQGANII) contributes to the NAD(+) binding site. Ser140 is a binding site for substrate. Tyr153 functions as the Proton acceptor in the catalytic mechanism.

This sequence belongs to the short-chain dehydrogenases/reductases (SDR) family.

The catalysed reaction is (R)-3-hydroxybutanoate + NAD(+) = acetoacetate + NADH + H(+). This chain is D-beta-hydroxybutyrate dehydrogenase (hbdH1), found in Cupriavidus necator (strain ATCC 17699 / DSM 428 / KCTC 22496 / NCIMB 10442 / H16 / Stanier 337) (Ralstonia eutropha).